The chain runs to 566 residues: 3-oxosteroid 1-dehydrogenase (566 aa).

Residue 10-39 coordinates FAD; sequence DVVVVGSGAAGMVAALVAAHRGLSTVVVEK.

This sequence belongs to the FAD-dependent oxidoreductase 2 family. 3-oxosteroid dehydrogenase subfamily. FAD serves as cofactor.

It catalyses the reaction a 3-oxosteroid + A = a 3-oxo-Delta(1)-steroid + AH2. The catalysed reaction is a 3-oxo-Delta(4)-steroid + A = a 3-oxo-Delta(1,4)-steroid + AH2. Functionally, involved in the degradation of cholesterol. Catalyzes the elimination of the C-1 and C-2 hydrogen atoms of the A-ring from the polycyclic ring structure of 3-ketosteroids. Is also involved in the formation of 3-keto-1,4-diene-steroid from 3-keto-4-ene-steroid. The protein is 3-oxosteroid 1-dehydrogenase (kstD) of Mycobacterium tuberculosis (strain CDC 1551 / Oshkosh).